The sequence spans 161 residues: Crossover junction endodeoxyribonuclease RuvC (161 aa).

Active-site residues include Asp8, Glu67, and Asp139. Asp8, Glu67, and Asp139 together coordinate Mg(2+).

It belongs to the RuvC family. Homodimer which binds Holliday junction (HJ) DNA. The HJ becomes 2-fold symmetrical on binding to RuvC with unstacked arms; it has a different conformation from HJ DNA in complex with RuvA. In the full resolvosome a probable DNA-RuvA(4)-RuvB(12)-RuvC(2) complex forms which resolves the HJ. Mg(2+) serves as cofactor.

It is found in the cytoplasm. It carries out the reaction Endonucleolytic cleavage at a junction such as a reciprocal single-stranded crossover between two homologous DNA duplexes (Holliday junction).. The RuvA-RuvB-RuvC complex processes Holliday junction (HJ) DNA during genetic recombination and DNA repair. Endonuclease that resolves HJ intermediates. Cleaves cruciform DNA by making single-stranded nicks across the HJ at symmetrical positions within the homologous arms, yielding a 5'-phosphate and a 3'-hydroxyl group; requires a central core of homology in the junction. The consensus cleavage sequence is 5'-(A/T)TT(C/G)-3'. Cleavage occurs on the 3'-side of the TT dinucleotide at the point of strand exchange. HJ branch migration catalyzed by RuvA-RuvB allows RuvC to scan DNA until it finds its consensus sequence, where it cleaves and resolves the cruciform DNA. The polypeptide is Crossover junction endodeoxyribonuclease RuvC (Wigglesworthia glossinidia brevipalpis).